A 597-amino-acid chain; its full sequence is TOX high mobility group box family member 4 (597 aa).

Disordered regions lie at residues 160–224 and 520–546; these read GAIL…EPQK and VQEE…SPQP. Positions 207–217 are enriched in basic residues; the sequence is KPKTPKKKKKK. The Nuclear localization signal motif lies at 212–217; sequence KKKKKK. A DNA-binding region (HMG box) is located at residues 222-290; that stretch reads PQKPLSAYAL…EYLKALALYK (69 aa).

In terms of assembly, component of the PNUTS-PP1 phosphatase complex.

It is found in the nucleus. It localises to the chromosome. Its function is as follows. Transcription factor that modulates cell fate reprogramming from the somatic state to the pluripotent and neuronal fate. Also acts as a regulatory component of protein phosphatase 1 (PP1) complexes. Component of the PNUTS-PP1 protein phosphatase complex, a PP1 complex that regulates RNA polymerase II transcription pause-release. PNUTS-PP1 also plays a role in the control of chromatin structure and cell cycle progression during the transition from mitosis into interphase. The protein is TOX high mobility group box family member 4 (tox4) of Xenopus tropicalis (Western clawed frog).